The chain runs to 140 residues: MAKQIIVTDSTSDLSHEYLKQHNIHVIPLSLTIDGKSYTDQADISSSEYIDHIENDADVKTSQPPIGRFIETYEQLAQDDVEIISIHLSSGLSGTYNTAVQASHMVDGNITVIDSKSISFGLGYQIKQIVELVLLQSKKI.

The DegV domain maps to 4 to 140 (QIIVTDSTSD…ELVLLQSKKI (137 aa)). 2 residues coordinate hexadecanoate: threonine 61 and serine 93.

May bind long-chain fatty acids, such as palmitate, and may play a role in lipid transport or fatty acid metabolism. The sequence is that of DegV domain-containing 15.5 kDa protein from Staphylococcus aureus.